A 360-amino-acid polypeptide reads, in one-letter code: Probable cinnamyl alcohol dehydrogenase 6 (360 aa).

Cys-48 contributes to the Zn(2+) binding site. NADP(+) is bound at residue Thr-50. The Zn(2+) site is built by His-70, Glu-71, Cys-101, Cys-104, Cys-107, Cys-115, and Cys-164. NADP(+) is bound by residues Thr-168, 192-197 (GLGGLG), 215-220 (STSPAK), Thr-255, Gly-279, and 302-304 (SMT).

It belongs to the zinc-containing alcohol dehydrogenase family. As to quaternary structure, homodimer. Requires Zn(2+) as cofactor.

The catalysed reaction is (E)-cinnamyl alcohol + NADP(+) = (E)-cinnamaldehyde + NADPH + H(+). It carries out the reaction (E)-coniferol + NADP(+) = (E)-coniferaldehyde + NADPH + H(+). It catalyses the reaction (E)-sinapyl alcohol + NADP(+) = (E)-sinapaldehyde + NADPH + H(+). The enzyme catalyses (E)-4-coumaroyl alcohol + NADP(+) = (E)-4-coumaraldehyde + NADPH + H(+). The catalysed reaction is (E)-caffeyl alcohol + NADP(+) = (E)-caffeyl aldehyde + NADPH + H(+). It participates in aromatic compound metabolism; phenylpropanoid biosynthesis. Functionally, involved in lignin biosynthesis. Catalyzes the final step specific for the production of lignin monomers. Catalyzes the NADPH-dependent reduction of coniferaldehyde, 5-hydroxyconiferaldehyde, sinapaldehyde, 4-coumaraldehyde and caffeyl aldehyde to their respective alcohols. This Oryza sativa subsp. japonica (Rice) protein is Probable cinnamyl alcohol dehydrogenase 6.